The following is a 188-amino-acid chain: UPF0340 protein GK3370 (188 aa).

It belongs to the UPF0340 family.

The protein is UPF0340 protein GK3370 of Geobacillus kaustophilus (strain HTA426).